The following is a 185-amino-acid chain: ATP synthase subunit b, cyanelle (185 aa).

The chain crosses the membrane as a helical span at residues 36 to 58 (LINLLVIFFLLIYQGRPFFTALL).

The protein belongs to the ATPase B chain family. As to quaternary structure, F-type ATPases have 2 components, F(1) - the catalytic core - and F(0) - the membrane proton channel. F(1) has five subunits: alpha(3), beta(3), gamma(1), delta(1), epsilon(1). F(0) has four main subunits: a(1), b(1), b'(1) and c(10-14). The alpha and beta chains form an alternating ring which encloses part of the gamma chain. F(1) is attached to F(0) by a central stalk formed by the gamma and epsilon chains, while a peripheral stalk is formed by the delta, b and b' chains.

Its subcellular location is the plastid. It is found in the cyanelle thylakoid membrane. F(1)F(0) ATP synthase produces ATP from ADP in the presence of a proton or sodium gradient. F-type ATPases consist of two structural domains, F(1) containing the extramembraneous catalytic core and F(0) containing the membrane proton channel, linked together by a central stalk and a peripheral stalk. During catalysis, ATP synthesis in the catalytic domain of F(1) is coupled via a rotary mechanism of the central stalk subunits to proton translocation. In terms of biological role, component of the F(0) channel, it forms part of the peripheral stalk, linking F(1) to F(0). This chain is ATP synthase subunit b, cyanelle, found in Cyanophora paradoxa.